A 418-amino-acid chain; its full sequence is 3-isopropylmalate dehydratase large subunit 1 (418 aa).

3 residues coordinate [4Fe-4S] cluster: cysteine 298, cysteine 358, and cysteine 361.

This sequence belongs to the aconitase/IPM isomerase family. LeuC type 2 subfamily. In terms of assembly, heterodimer of LeuC and LeuD. [4Fe-4S] cluster is required as a cofactor.

It carries out the reaction (2R,3S)-3-isopropylmalate = (2S)-2-isopropylmalate. It participates in amino-acid biosynthesis; L-leucine biosynthesis; L-leucine from 3-methyl-2-oxobutanoate: step 2/4. Functionally, catalyzes the isomerization between 2-isopropylmalate and 3-isopropylmalate, via the formation of 2-isopropylmaleate. This chain is 3-isopropylmalate dehydratase large subunit 1, found in Methanopyrus kandleri (strain AV19 / DSM 6324 / JCM 9639 / NBRC 100938).